Consider the following 645-residue polypeptide: 1-deoxy-D-xylulose-5-phosphate synthase 1 (645 aa).

Residues 1–20 (MTDTKTPTLDRVAGPADLRS) form a disordered region. Thiamine diphosphate contacts are provided by residues His78 and 119-121 (AHS). Mg(2+) is bound at residue Asp150. Residues 151–152 (GS), Asn179, Tyr291, and Glu373 each bind thiamine diphosphate. Asn179 serves as a coordination point for Mg(2+).

The protein belongs to the transketolase family. DXPS subfamily. Homodimer. The cofactor is Mg(2+). Requires thiamine diphosphate as cofactor.

The enzyme catalyses D-glyceraldehyde 3-phosphate + pyruvate + H(+) = 1-deoxy-D-xylulose 5-phosphate + CO2. It functions in the pathway metabolic intermediate biosynthesis; 1-deoxy-D-xylulose 5-phosphate biosynthesis; 1-deoxy-D-xylulose 5-phosphate from D-glyceraldehyde 3-phosphate and pyruvate: step 1/1. In terms of biological role, catalyzes the acyloin condensation reaction between C atoms 2 and 3 of pyruvate and glyceraldehyde 3-phosphate to yield 1-deoxy-D-xylulose-5-phosphate (DXP). The sequence is that of 1-deoxy-D-xylulose-5-phosphate synthase 1 from Roseobacter denitrificans (strain ATCC 33942 / OCh 114) (Erythrobacter sp. (strain OCh 114)).